Here is a 591-residue protein sequence, read N- to C-terminus: V-type ATP synthase alpha chain (591 aa).

242–249 (GPFGAGKT) contacts ATP.

Belongs to the ATPase alpha/beta chains family.

The catalysed reaction is ATP + H2O + 4 H(+)(in) = ADP + phosphate + 5 H(+)(out). Produces ATP from ADP in the presence of a proton gradient across the membrane. The V-type alpha chain is a catalytic subunit. This is V-type ATP synthase alpha chain from Chlamydia abortus (strain DSM 27085 / S26/3) (Chlamydophila abortus).